The sequence spans 157 residues: Ribonuclease 8 (157 aa).

The N-terminal stretch at methionine 1–alanine 30 is a signal peptide. Histidine 45 functions as the Proton acceptor in the catalytic mechanism. 4 cysteine pairs are disulfide-bonded: cysteine 53-cysteine 96, cysteine 67-cysteine 121, cysteine 85-cysteine 136, and cysteine 92-cysteine 99. Substrate-binding positions include lysine 68–threonine 72 and lysine 93. Histidine 152 serves as the catalytic Proton donor.

This sequence belongs to the pancreatic ribonuclease family.

It localises to the secreted. Its function is as follows. Has a low ribonuclease activity. The protein is Ribonuclease 8 (RNASE8) of Pan troglodytes (Chimpanzee).